Here is a 335-residue protein sequence, read N- to C-terminus: uncharacterized protein (335 aa).

This is an uncharacterized protein from Schizosaccharomyces pombe (strain 972 / ATCC 24843) (Fission yeast).